A 392-amino-acid chain; its full sequence is MSVIKLVDLDLKNKRVFIRSDLNVPVKEGKVTSDARITASMATINHCLKQGARVMVTSHLGRPEEGVWAMENSLQPVANDISRRLGTTVRLIKDWVDGGFEVAPGELVILENCRINKGEKKNLEETAKKYANLCDVFVMDAFGTAHRAEASTHGVAKYAPVACAGILLTEELDALTKALHQPARPLVAIVGGSKVSTKLTVLESLTEKVDQLVVGGGIANTFLKAAGNNVGKSLCEDELVPIAKSLMDKMNQRNATIPIAIDVVVGKKFAADEPAVLKEANAVSDDDMIFDIGPKSTQELVNIIMKAGTVVWNGPVGVFEFDQFGEGTHAIAKAIAETDAFTLAGGGDTIAAIQKYDIYDKVSYISTAGGAFLEFLEGKKLPAVEILELRAQ.

Substrate-binding positions include 21–23, Arg36, 59–62, Arg114, and Arg147; these read DLN and HLGR. ATP contacts are provided by residues Lys198, Glu320, and 346–349; that span reads GGDT.

This sequence belongs to the phosphoglycerate kinase family. In terms of assembly, monomer.

Its subcellular location is the cytoplasm. The catalysed reaction is (2R)-3-phosphoglycerate + ATP = (2R)-3-phospho-glyceroyl phosphate + ADP. The protein operates within carbohydrate degradation; glycolysis; pyruvate from D-glyceraldehyde 3-phosphate: step 2/5. This Nitrosomonas eutropha (strain DSM 101675 / C91 / Nm57) protein is Phosphoglycerate kinase.